A 360-amino-acid polypeptide reads, in one-letter code: BOLA class I histocompatibility antigen, alpha chain BL3-6 (360 aa).

Residues 1 to 21 (MGPRALLLLLSGVLILTETRA) form the signal peptide. The segment at 22–111 (GSHSLRYFST…LRGYYNQSEA (90 aa)) is alpha-1. At 22-308 (GSHSLRYFST…QPSFLTMGII (287 aa)) the chain is on the extracellular side. A glycan (N-linked (GlcNAc...) asparagine) is linked at Asn-107. The alpha-2 stretch occupies residues 112–203 (GSHTLQWMSG…ENGKDTLLRA (92 aa)). 2 disulfides stabilise this stretch: Cys-122/Cys-185 and Cys-224/Cys-280. Residues 204-295 (DPPKAHVTHH…GLQEPLTLRW (92 aa)) form an alpha-3 region. The Ig-like C1-type domain maps to 206 to 292 (PKAHVTHHPI…QHEGLQEPLT (87 aa)). The interval 296–308 (EPPQPSFLTMGII) is connecting peptide. The helical transmembrane segment at 309–328 (VGLVLLVVTGAVVAGVVICM) threads the bilayer. Residues 329–360 (KKRSGEKGGNYIQASSSDSAQGSDVSLTVPKV) lie on the Cytoplasmic side of the membrane. The interval 340–360 (IQASSSDSAQGSDVSLTVPKV) is disordered. Residues 341–354 (QASSSDSAQGSDVS) are compositionally biased toward low complexity. Phosphoserine occurs at positions 351 and 354.

This sequence belongs to the MHC class I family. As to quaternary structure, heterodimer of an alpha chain and a beta chain (beta-2-microglobulin).

The protein resides in the membrane. Its function is as follows. Involved in the presentation of foreign antigens to the immune system. The polypeptide is BOLA class I histocompatibility antigen, alpha chain BL3-6 (Bos taurus (Bovine)).